A 344-amino-acid polypeptide reads, in one-letter code: Mycothiol acetyltransferase (344 aa).

Glu-36 contacts 1D-myo-inositol 2-(L-cysteinylamino)-2-deoxy-alpha-D-glucopyranoside. 2 N-acetyltransferase domains span residues 40-179 and 187-344; these read LALR…TPLP and VTVR…PSTG. Residues 61–83 form a disordered region; it reads ADTSGPNVPDTPGDQNAADTSTM. The span at 73 to 83 shows a compositional bias: polar residues; that stretch reads GDQNAADTSTM. 109 to 111 lines the acetyl-CoA pocket; that stretch reads VVV. 3 residues coordinate 1D-myo-inositol 2-(L-cysteinylamino)-2-deoxy-alpha-D-glucopyranoside: Glu-214, Lys-253, and Glu-272. Residues 276 to 278 and 283 to 289 contribute to the acetyl-CoA site; these read VGV and GGAGLGR. Tyr-310 provides a ligand contact to 1D-myo-inositol 2-(L-cysteinylamino)-2-deoxy-alpha-D-glucopyranoside. 315 to 320 is a binding site for acetyl-CoA; it reads NVRAVR.

Belongs to the acetyltransferase family. MshD subfamily. In terms of assembly, monomer.

The catalysed reaction is 1D-myo-inositol 2-(L-cysteinylamino)-2-deoxy-alpha-D-glucopyranoside + acetyl-CoA = mycothiol + CoA + H(+). Its function is as follows. Catalyzes the transfer of acetyl from acetyl-CoA to desacetylmycothiol (Cys-GlcN-Ins) to form mycothiol. In Frankia casuarinae (strain DSM 45818 / CECT 9043 / HFP020203 / CcI3), this protein is Mycothiol acetyltransferase.